A 119-amino-acid chain; its full sequence is Flagellar transcriptional regulator FlhD (119 aa).

The protein belongs to the FlhD family. As to quaternary structure, homodimer; disulfide-linked. Forms a heterohexamer composed of two FlhC and four FlhD subunits. Each FlhC binds a FlhD dimer, forming a heterotrimer, and a hexamer assembles by dimerization of two heterotrimers.

It localises to the cytoplasm. Its function is as follows. Functions in complex with FlhC as a master transcriptional regulator that regulates transcription of several flagellar and non-flagellar operons by binding to their promoter region. Activates expression of class 2 flagellar genes, including fliA, which is a flagellum-specific sigma factor that turns on the class 3 genes. Also regulates genes whose products function in a variety of physiological pathways. This Shigella dysenteriae serotype 1 (strain Sd197) protein is Flagellar transcriptional regulator FlhD.